The sequence spans 205 residues: Small ribosomal subunit protein uS4 (205 aa).

Positions 1-49 (MSKRQSAKYKLDRRMGENIWGRPKSPVNRREYGPGQHGQRRKGKLSDFG) are disordered. Residues 94-157 (SRLDAIVFRA…KQLTVVLESV (64 aa)) enclose the S4 RNA-binding domain.

This sequence belongs to the universal ribosomal protein uS4 family. Part of the 30S ribosomal subunit. Contacts protein S5. The interaction surface between S4 and S5 is involved in control of translational fidelity.

One of the primary rRNA binding proteins, it binds directly to 16S rRNA where it nucleates assembly of the body of the 30S subunit. In terms of biological role, with S5 and S12 plays an important role in translational accuracy. The polypeptide is Small ribosomal subunit protein uS4 (Chelativorans sp. (strain BNC1)).